The following is a 312-amino-acid chain: Acetaldehyde dehydrogenase (312 aa).

12–15 (SGNV) contributes to the NAD(+) binding site. The active-site Acyl-thioester intermediate is cysteine 132. NAD(+) contacts are provided by residues 163–171 (SAGPGTRAN) and asparagine 290.

This sequence belongs to the acetaldehyde dehydrogenase family.

The catalysed reaction is acetaldehyde + NAD(+) + CoA = acetyl-CoA + NADH + H(+). This is Acetaldehyde dehydrogenase (cbzQ) from Pseudomonas putida (Arthrobacter siderocapsulatus).